The chain runs to 326 residues: G-protein coupled receptor 171 (326 aa).

Residues 1-19 (MTNSSMFCPIYRDLEPFTY) are Extracellular-facing. Residues 20-40 (FFYLVYLIGIIGSCFATWAFI) traverse the membrane as a helical segment. Topologically, residues 41–48 (QKSTNHRC) are cytoplasmic. The helical transmembrane segment at 49 to 69 (VSIYLINLLTADFLLTLALPV) threads the bilayer. The Extracellular portion of the chain corresponds to 70 to 89 (KIVVDLGVAPWKLRIFHCQV). Cysteines 87 and 165 form a disulfide. A helical membrane pass occupies residues 90-110 (TACLIYINMYLSIIFLAFVSI). Residues 111 to 133 (DRCLQLVHSCKIYRIQEPGFAKM) lie on the Cytoplasmic side of the membrane. A helical membrane pass occupies residues 134 to 154 (ISAVVWLMVLLIMVPNMVIPI). The Extracellular segment spans residues 155-182 (KNIKEKSNVGCMEFKREFGKNWHLLTNF). A helical transmembrane segment spans residues 183–203 (ICVAIFLNFSAIILISNFLVI). At 204–221 (RQLYRNRDNANYPSVKSA) the chain is on the cytoplasmic side. Residues 222–242 (LLNILLVTASYIICFVPYHAV) form a helical membrane-spanning segment. The Extracellular portion of the chain corresponds to 243 to 268 (RIPYTLSQTEVISDCSTRIALFKAKE). The chain crosses the membrane as a helical span at residues 269 to 289 (ATLLLAVSNLCFDPILYYHLS). The Cytoplasmic portion of the chain corresponds to 290–326 (KAFRLKVTETFASPQKMKAREEKPRRENDVQSTGSAC). The disordered stretch occupies residues 305–326 (KMKAREEKPRRENDVQSTGSAC). A compositionally biased stretch (basic and acidic residues) spans 307–318 (KAREEKPRREND).

Belongs to the G-protein coupled receptor 1 family.

Its subcellular location is the cell membrane. Functionally, G-protein coupled receptor for Big LEN, a 16-amino acid neuropeptide produced from the precursor protein, proSAAS (encoded by PCSK1N). Acts through a G(i)-alpha-mediated pathway in response to Big LEN. Big LEN-GPR171 system plays an important role in regulating feeding and metabolism. Also plays a role in modulating fear and anxiety-like behaviors in the basolateral amygdala. Big LEN-GPR171 modulates the mu-type opioid receptor signaling and antinociception. Acts as a negative regulator T cell function. This chain is G-protein coupled receptor 171, found in Rattus norvegicus (Rat).